The sequence spans 904 residues: Nitrate reductase [NADH] 2 (904 aa).

Composition is skewed to polar residues over residues 1–10 and 35–50; these read MAASVENRQF and PSPNSTNFQKKPNSTI. Residues 1-65 form a disordered region; that stretch reads MAASVENRQF…SSEDDDDDDE (65 aa). Residues 56–65 are compositionally biased toward acidic residues; sequence SSEDDDDDDE. Cysteine 183 provides a ligand contact to Mo-molybdopterin. The Cytochrome b5 heme-binding domain occupies 531–606; it reads SKMYSMSEVR…LEDFRIGELI (76 aa). Heme is bound by residues histidine 566 and histidine 589. Residues 647–759 form the FAD-binding FR-type domain; it reads REKIPCKLID…KGPLGHIEYQ (113 aa). Residues 699–702, 716–720, phenylalanine 721, phenylalanine 728, 733–735, and threonine 786 contribute to the FAD site; these read RAYT, VVKIY, and QMS.

This sequence belongs to the nitrate reductase family. As to quaternary structure, homodimer. Requires FAD as cofactor. It depends on heme as a cofactor. The cofactor is Mo-molybdopterin.

It carries out the reaction nitrite + NAD(+) + H2O = nitrate + NADH + H(+). Regulated by the nitrogen source and controlled by the circadian rhythm. Nitrate reductase is a key enzyme involved in the first step of nitrate assimilation in plants, fungi and bacteria. This chain is Nitrate reductase [NADH] 2 (NIA2), found in Nicotiana tabacum (Common tobacco).